We begin with the raw amino-acid sequence, 386 residues long: Large ribosomal subunit protein uL4 (386 aa).

Residues 341-357 show a composition bias toward basic and acidic residues; the sequence is VEQRRLKEKQAKLDQKR. Residues 341–386 form a disordered region; it reads VEQRRLKEKQAKLDQKRGIATPVEGAGKGRPRKTTAKPTKAKAGKK. Basic residues predominate over residues 369–386; sequence GRPRKTTAKPTKAKAGKK.

It belongs to the universal ribosomal protein uL4 family.

The polypeptide is Large ribosomal subunit protein uL4 (RPL4) (Urechis caupo (Innkeeper worm)).